The primary structure comprises 149 residues: Nucleoside diphosphate kinase (149 aa).

ATP contacts are provided by K9, F57, R85, T91, R102, and N112. Catalysis depends on H115, which acts as the Pros-phosphohistidine intermediate.

It belongs to the NDK family. In terms of assembly, homotetramer. Requires Mg(2+) as cofactor.

The protein localises to the cytoplasm. The enzyme catalyses a 2'-deoxyribonucleoside 5'-diphosphate + ATP = a 2'-deoxyribonucleoside 5'-triphosphate + ADP. It carries out the reaction a ribonucleoside 5'-diphosphate + ATP = a ribonucleoside 5'-triphosphate + ADP. In terms of biological role, major role in the synthesis of nucleoside triphosphates other than ATP. The ATP gamma phosphate is transferred to the NDP beta phosphate via a ping-pong mechanism, using a phosphorylated active-site intermediate. This chain is Nucleoside diphosphate kinase, found in Acaryochloris marina (strain MBIC 11017).